A 94-amino-acid chain; its full sequence is ESAT-6-like protein EsxL (94 aa).

This sequence belongs to the WXG100 family. ESAT-6 subfamily. As to quaternary structure, strongly interacts with EsxK to form a heterodimeric complex under reducing conditions.

The protein localises to the secreted. The sequence is that of ESAT-6-like protein EsxL from Mycobacterium tuberculosis (strain CDC 1551 / Oshkosh).